Reading from the N-terminus, the 613-residue chain is DNA mismatch repair protein MutL (613 aa).

It belongs to the DNA mismatch repair MutL/HexB family.

In terms of biological role, this protein is involved in the repair of mismatches in DNA. It is required for dam-dependent methyl-directed DNA mismatch repair. May act as a 'molecular matchmaker', a protein that promotes the formation of a stable complex between two or more DNA-binding proteins in an ATP-dependent manner without itself being part of a final effector complex. In Bradyrhizobium sp. (strain ORS 278), this protein is DNA mismatch repair protein MutL.